The chain runs to 252 residues: Aspartate/glutamate leucyltransferase (252 aa).

Belongs to the R-transferase family. Bpt subfamily.

Its subcellular location is the cytoplasm. It carries out the reaction N-terminal L-glutamyl-[protein] + L-leucyl-tRNA(Leu) = N-terminal L-leucyl-L-glutamyl-[protein] + tRNA(Leu) + H(+). It catalyses the reaction N-terminal L-aspartyl-[protein] + L-leucyl-tRNA(Leu) = N-terminal L-leucyl-L-aspartyl-[protein] + tRNA(Leu) + H(+). Functions in the N-end rule pathway of protein degradation where it conjugates Leu from its aminoacyl-tRNA to the N-termini of proteins containing an N-terminal aspartate or glutamate. The sequence is that of Aspartate/glutamate leucyltransferase from Agrobacterium fabrum (strain C58 / ATCC 33970) (Agrobacterium tumefaciens (strain C58)).